A 427-amino-acid polypeptide reads, in one-letter code: Light-independent protochlorophyllide reductase subunit N (427 aa).

Positions 32, 57, and 118 each coordinate [4Fe-4S] cluster.

Belongs to the BchN/ChlN family. As to quaternary structure, protochlorophyllide reductase is composed of three subunits; BchL, BchN and BchB. Forms a heterotetramer of two BchB and two BchN subunits. It depends on [4Fe-4S] cluster as a cofactor.

The catalysed reaction is chlorophyllide a + oxidized 2[4Fe-4S]-[ferredoxin] + 2 ADP + 2 phosphate = protochlorophyllide a + reduced 2[4Fe-4S]-[ferredoxin] + 2 ATP + 2 H2O. It participates in porphyrin-containing compound metabolism; bacteriochlorophyll biosynthesis (light-independent). Its function is as follows. Component of the dark-operative protochlorophyllide reductase (DPOR) that uses Mg-ATP and reduced ferredoxin to reduce ring D of protochlorophyllide (Pchlide) to form chlorophyllide a (Chlide). This reaction is light-independent. The NB-protein (BchN-BchB) is the catalytic component of the complex. The chain is Light-independent protochlorophyllide reductase subunit N from Rubrivivax gelatinosus (strain NBRC 100245 / IL144).